Here is a 1075-residue protein sequence, read N- to C-terminus: DNA-directed RNA polymerase subunit beta (1075 aa).

The protein belongs to the RNA polymerase beta chain family. As to quaternary structure, in plastids the minimal PEP RNA polymerase catalytic core is composed of four subunits: alpha, beta, beta', and beta''. When a (nuclear-encoded) sigma factor is associated with the core the holoenzyme is formed, which can initiate transcription.

It localises to the plastid. Its subcellular location is the chloroplast. It catalyses the reaction RNA(n) + a ribonucleoside 5'-triphosphate = RNA(n+1) + diphosphate. Its function is as follows. DNA-dependent RNA polymerase catalyzes the transcription of DNA into RNA using the four ribonucleoside triphosphates as substrates. In Zea mays (Maize), this protein is DNA-directed RNA polymerase subunit beta.